The chain runs to 434 residues: AT-rich interactive domain-containing protein 5 (434 aa).

Residues 1-120 form a disordered region; sequence MMADTEMQEQ…SSPHVPEESV (120 aa). Basic and acidic residues-rich tracts occupy residues 25–37, 43–54, and 78–90; these read ELEK…ERPK, DTTHTLDSDVHL, and RNGD…KKIT. Residues 92–102 show a composition bias toward polar residues; sequence DGGQEETTLGE. An ARID domain is found at 142–233; it reads PQDQEAFIKE…ALLEYEKHLR (92 aa). Positions 237 to 274 are disordered; the sequence is ELNLPGSASLPSSGIEKEASSHQASGSGRTRRDAAARA. Residues 336–434 enclose the sHSP domain; sequence AEVIDVGPPA…RLFVRVPFEQ (99 aa).

It belongs to the small heat shock protein (HSP20) family.

The protein localises to the nucleus. This is AT-rich interactive domain-containing protein 5 (ARID5) from Arabidopsis thaliana (Mouse-ear cress).